Here is a 227-residue protein sequence, read N- to C-terminus: Extracellular deoxyribonuclease (227 aa).

Positions Met-1–Ala-20 are cleaved as a signal peptide.

Belongs to the EndA/NucM nuclease family.

It is found in the secreted. This is Extracellular deoxyribonuclease from Aeromonas hydrophila.